The primary structure comprises 488 residues: E3 ubiquitin-protein ligase TRIM34 (488 aa).

The RING-type zinc-finger motif lies at 15-60; it reads CPICLELLTEPLSLDCGHSLCRACITVSNKEAVTSMGGKSSCPVCG. A B box-type zinc finger spans residues 92–134; it reads KKRDLCDHHGEKLLLFCKEDRKVICWLCERSQEHRGHHTVLTE. Positions 97, 100, 119, and 125 each coordinate Zn(2+). A coiled-coil region spans residues 131 to 239; it reads VLTEEVFKEC…VRELISDVEC (109 aa). Residues 283–488 form the B30.2/SPRY domain; it reads LSRMLQMFRE…APMTLCPPSS (206 aa).

Belongs to the TRIM/RBCC family. Homotrimer. Interacts (via B-box and SPRY domain) with TRIM5. In terms of assembly, (Microbial infection) Interacts (via the B30.2/SPRY domain) with HIV-1 capsid complexes. As to expression, is the most abundant form. It is highly expressed in the placenta, spleen, colon and peripheral blood leukocytes.

It localises to the cytoplasm. The protein localises to the mitochondrion. It catalyses the reaction S-ubiquitinyl-[E2 ubiquitin-conjugating enzyme]-L-cysteine + [acceptor protein]-L-lysine = [E2 ubiquitin-conjugating enzyme]-L-cysteine + N(6)-ubiquitinyl-[acceptor protein]-L-lysine.. It participates in protein modification; protein ubiquitination. Functions as antiviral protein and contributes to the defense against retroviral infections. Acts as a capsid-specific restriction factor with the help of TRIM5 and prevents infection from non-host-adapted retroviruses. During influenza A virus infection, promotes programmed cell death by targeting ZBP1 for 'Lys-63'-linked polyubiquitination. In turn, promotes ZBP1 recruitment of RIPK3 to mediate virus-induced programmed necrosis. Negatively regulates the function of mitochondria by enhancing mitochondrial depolarization leading to cytochrome c release and mitochondria-dependent apoptosis. Also promotes the formation of multinucleated giant cells by means of cell fusion and phagocytosis in epithelial cells. This chain is E3 ubiquitin-protein ligase TRIM34 (TRIM34), found in Homo sapiens (Human).